The primary structure comprises 129 residues: Ig kappa chain V-IV region S107B (129 aa).

The N-terminal stretch at 1-22 (MDLQVQIIXFLLISVTVIMSRG) is a signal peptide. The framework-1 stretch occupies residues 23 to 45 (ENVLTQSPAIMAASLGQKVTMTC). A disulfide bridge links Cys-45 with Cys-111. The tract at residues 46–57 (SASSSVSSSYLH) is complementarity-determining-1. The segment at 58–72 (WYQQKSGASPKPLIH) is framework-2. The interval 73–79 (RTSNLAS) is complementarity-determining-2. The framework-3 stretch occupies residues 80–111 (GVPARFSGSGSGTSYSLTISSVEAEDDATYYC). Positions 112 to 118 (QQWSGYP) are complementarity-determining-3. The interval 119–128 (FGSGTKLEIK) is framework-4.

The protein is Ig kappa chain V-IV region S107B of Mus musculus (Mouse).